The chain runs to 597 residues: Arginine--tRNA ligase (597 aa).

Residues 125–135 (PNTNKPLHLGH) carry the 'HIGH' region motif.

Belongs to the class-I aminoacyl-tRNA synthetase family. In terms of assembly, monomer.

It is found in the cytoplasm. The enzyme catalyses tRNA(Arg) + L-arginine + ATP = L-arginyl-tRNA(Arg) + AMP + diphosphate. The protein is Arginine--tRNA ligase of Porphyromonas gingivalis (strain ATCC BAA-308 / W83).